Reading from the N-terminus, the 429-residue chain is Enolase (429 aa).

(2R)-2-phosphoglycerate is bound at residue glutamine 162. Glutamate 204 (proton donor) is an active-site residue. 3 residues coordinate Mg(2+): aspartate 241, glutamate 288, and aspartate 315. (2R)-2-phosphoglycerate-binding residues include lysine 340, arginine 369, serine 370, and lysine 391. Lysine 340 (proton acceptor) is an active-site residue.

The protein belongs to the enolase family. Mg(2+) serves as cofactor.

It is found in the cytoplasm. Its subcellular location is the secreted. The protein resides in the cell surface. The catalysed reaction is (2R)-2-phosphoglycerate = phosphoenolpyruvate + H2O. The protein operates within carbohydrate degradation; glycolysis; pyruvate from D-glyceraldehyde 3-phosphate: step 4/5. Functionally, catalyzes the reversible conversion of 2-phosphoglycerate (2-PG) into phosphoenolpyruvate (PEP). It is essential for the degradation of carbohydrates via glycolysis. The sequence is that of Enolase from Christiangramia forsetii (strain DSM 17595 / CGMCC 1.15422 / KT0803) (Gramella forsetii).